The chain runs to 444 residues: tRNA modification GTPase MnmE (444 aa).

Residues Arg21, Glu79, and Lys118 each contribute to the (6S)-5-formyl-5,6,7,8-tetrahydrofolate site. The 151-residue stretch at 215-365 (GLNVVIVGKP…LVNEIKTNLK (151 aa)) folds into the TrmE-type G domain. Asn225 provides a ligand contact to K(+). Residues 225-230 (NVGKSS), 244-250 (SDIKGTT), and 269-272 (DTAG) each bind GTP. Ser229 serves as a coordination point for Mg(2+). Ser244, Ile246, and Thr249 together coordinate K(+). A Mg(2+)-binding site is contributed by Thr250. Lys444 lines the (6S)-5-formyl-5,6,7,8-tetrahydrofolate pocket.

Belongs to the TRAFAC class TrmE-Era-EngA-EngB-Septin-like GTPase superfamily. TrmE GTPase family. As to quaternary structure, homodimer. Heterotetramer of two MnmE and two MnmG subunits. The cofactor is K(+).

It localises to the cytoplasm. Exhibits a very high intrinsic GTPase hydrolysis rate. Involved in the addition of a carboxymethylaminomethyl (cmnm) group at the wobble position (U34) of certain tRNAs, forming tRNA-cmnm(5)s(2)U34. The chain is tRNA modification GTPase MnmE from Malacoplasma penetrans (strain HF-2) (Mycoplasma penetrans).